The sequence spans 179 residues: Cellular nucleic acid-binding protein homolog (179 aa).

7 consecutive CCHC-type zinc fingers follow at residues 17-34 (PRCY…ECTK), 36-53 (SICY…ECTE), 58-75 (KTCY…DCPS), 83-100 (AECY…DCRT), 116-133 (MNCY…DCTM), 135-152 (VKCY…ECQQ), and 157-174 (QLCY…NCTS).

This sequence to human CNBP and to retroviral nucleic acid binding proteins (NBP). Post-translationally, phosphorylated.

The protein resides in the nucleus. Acts in the sexual differentiation pathway. Is required for efficient conjugation. Double-stranded DNA-binding protein. This Schizosaccharomyces pombe (strain 972 / ATCC 24843) (Fission yeast) protein is Cellular nucleic acid-binding protein homolog (byr3).